A 416-amino-acid chain; its full sequence is Gamma-glutamyl phosphate reductase (416 aa).

It belongs to the gamma-glutamyl phosphate reductase family.

It localises to the cytoplasm. It catalyses the reaction L-glutamate 5-semialdehyde + phosphate + NADP(+) = L-glutamyl 5-phosphate + NADPH + H(+). It functions in the pathway amino-acid biosynthesis; L-proline biosynthesis; L-glutamate 5-semialdehyde from L-glutamate: step 2/2. Catalyzes the NADPH-dependent reduction of L-glutamate 5-phosphate into L-glutamate 5-semialdehyde and phosphate. The product spontaneously undergoes cyclization to form 1-pyrroline-5-carboxylate. This chain is Gamma-glutamyl phosphate reductase, found in Salmonella heidelberg (strain SL476).